Reading from the N-terminus, the 760-residue chain is Catecholate siderophore receptor Fiu (760 aa).

Positions 1–31 (MENNRNFPARQFHSLTFFAGLCIGITPVAQA) are cleaved as a signal peptide. One can recognise a TBDR plug domain in the interval 67 to 175 (PVADTTRTMT…PTGSINMISK (109 aa)). Positions 180 to 760 (DSGIDASASI…TFLLTANMHF (581 aa)) constitute a TBDR beta-barrel domain. The TonB C-terminal box signature appears at 743 to 760 (RYHPGEPRTFLLTANMHF).

This sequence belongs to the TonB-dependent receptor family.

Its subcellular location is the cell outer membrane. Functionally, involved in the active transport across the outer membrane of iron complexed with catecholate siderophores such as dihydroxybenzoylserine and dihydroxybenzoate. It derives its energy for transport by interacting with the trans-periplasmic membrane protein TonB. Can also transport catechol-substituted cephalosporins. Receptor for microcins M, H47 and E492. This Escherichia coli (strain K12) protein is Catecholate siderophore receptor Fiu (fiu).